The sequence spans 373 residues: MPGWSCLVTGAGGFLGQRIVQMLVQEKELQEVRVLYRTFSPKHKEELSKLQTKAKVTVLRGDIVDAQFLRRACQGMSVIIHTAAALDIAGFLPRQTILDVNVKGTQLLLDACVEASVPAFIYSSSTGVAGPNSYKETILNDREEEHRESTWSNPYPYSKRMAEKAVLAANGSILKNGGTFHTCALRLPFIYGEESQIISTMVNRALKNNSIIKRHATFSIANPVYVGNAAWAHILAARGLRDPEKSQSIQGQFYYISDDTPHQSYDDLNYTLSKEWGFCLDSSWSLPLPLLYWLAFLLETVSFLLRPFYNYRPPFNRFMVTILNSVFTISYKKAQRDLGYEPLVSWEEAKQKTSEWIGTLVEQHRETLDTKSQ.

NADP(+) is bound by residues 10 to 15 (GAGGFL), Tyr155, and Lys159. Residue Lys159 is the Proton donor of the active site. A helical membrane pass occupies residues 288–308 (LPLLYWLAFLLETVSFLLRPF). Lys350 carries the post-translational modification N6-acetyllysine.

It belongs to the 3-beta-HSD family. In terms of tissue distribution, expressed predominantly in male liver.

It localises to the endoplasmic reticulum membrane. Its subcellular location is the mitochondrion membrane. It carries out the reaction a 3beta-hydroxysteroid + NADP(+) = a 3-oxosteroid + NADPH + H(+). The enzyme catalyses 5alpha-androstane-3beta,17beta-diol + NADP(+) = 17beta-hydroxy-5alpha-androstan-3-one + NADPH + H(+). It catalyses the reaction 3beta-hydroxy-5alpha-androstan-17-one + NADP(+) = 5alpha-androstan-3,17-dione + NADPH + H(+). It functions in the pathway steroid metabolism. Functionally, responsible for the reduction of the oxo group on the C-3 of 5alpha-androstane steroids. Catalyzes the conversion of dihydrotestosterone to its inactive form 5alpha-androstanediol, that does not bind androgen receptor/AR. Also converts androstanedione, a precursor of testosterone and estrone, to epiandrosterone. Does not function as an isomerase. This chain is NADPH-dependent 3-keto-steroid reductase Hsd3b5, found in Rattus norvegicus (Rat).